Here is a 233-residue protein sequence, read N- to C-terminus: Lactate utilization protein C (233 aa).

This sequence belongs to the LutC/YkgG family.

Is involved in L-lactate degradation and allows cells to grow with lactate as the sole carbon source. This is Lactate utilization protein C from Oceanobacillus iheyensis (strain DSM 14371 / CIP 107618 / JCM 11309 / KCTC 3954 / HTE831).